The primary structure comprises 171 residues: Sec-independent protein translocase protein TatB (171 aa).

A helical membrane pass occupies residues 1-21; the sequence is MFDIGFSELLLVFIIGLVVLG. Residues 117-171 are disordered; that stretch reads KDNETAHEGVTPAAAQTQASSPEQKPETTPEPVVKPAADAEPKTAAPSPSSSDKP. The span at 130-139 shows a compositional bias: polar residues; that stretch reads AAQTQASSPE.

Belongs to the TatB family. As to quaternary structure, the Tat system comprises two distinct complexes: a TatABC complex, containing multiple copies of TatA, TatB and TatC subunits, and a separate TatA complex, containing only TatA subunits. Substrates initially bind to the TatABC complex, which probably triggers association of the separate TatA complex to form the active translocon.

The protein resides in the cell inner membrane. Functionally, part of the twin-arginine translocation (Tat) system that transports large folded proteins containing a characteristic twin-arginine motif in their signal peptide across membranes. Together with TatC, TatB is part of a receptor directly interacting with Tat signal peptides. TatB may form an oligomeric binding site that transiently accommodates folded Tat precursor proteins before their translocation. In Escherichia coli O6:K15:H31 (strain 536 / UPEC), this protein is Sec-independent protein translocase protein TatB.